The following is a 456-amino-acid chain: Cysteine--tRNA ligase (456 aa).

Cys-28 lines the Zn(2+) pocket. Residues 30–40 (ITVYDHCHLGH) carry the 'HIGH' region motif. Zn(2+) contacts are provided by Cys-209, His-234, and Glu-238. Positions 266 to 270 (KMAKS) match the 'KMSKS' region motif. Lys-269 is a binding site for ATP.

The protein belongs to the class-I aminoacyl-tRNA synthetase family. As to quaternary structure, monomer. Zn(2+) is required as a cofactor.

The protein localises to the cytoplasm. The catalysed reaction is tRNA(Cys) + L-cysteine + ATP = L-cysteinyl-tRNA(Cys) + AMP + diphosphate. This chain is Cysteine--tRNA ligase, found in Legionella pneumophila (strain Corby).